A 424-amino-acid polypeptide reads, in one-letter code: Enolase (424 aa).

Position 162 (Gln-162) interacts with (2R)-2-phosphoglycerate. Residue Glu-204 is the Proton donor of the active site. Mg(2+)-binding residues include Asp-241, Glu-284, and Asp-311. (2R)-2-phosphoglycerate-binding residues include Lys-336, Arg-365, Ser-366, and Lys-387. The active-site Proton acceptor is the Lys-336.

Belongs to the enolase family. It depends on Mg(2+) as a cofactor.

It is found in the cytoplasm. Its subcellular location is the secreted. It localises to the cell surface. The catalysed reaction is (2R)-2-phosphoglycerate = phosphoenolpyruvate + H2O. It functions in the pathway carbohydrate degradation; glycolysis; pyruvate from D-glyceraldehyde 3-phosphate: step 4/5. Its function is as follows. Catalyzes the reversible conversion of 2-phosphoglycerate (2-PG) into phosphoenolpyruvate (PEP). It is essential for the degradation of carbohydrates via glycolysis. In Agrobacterium fabrum (strain C58 / ATCC 33970) (Agrobacterium tumefaciens (strain C58)), this protein is Enolase.